The sequence spans 571 residues: Gag-Pro polyprotein (571 aa).

A lipid anchor (N-myristoyl glycine; by host) is attached at G2. Residues 100–103 (PPPY) carry the PPXY motif motif. 2 repeats span residues 342-362 (PPPGPCYRCLKEGHWARDCPT) and 367-387 (PPPGPCPICKDPSHWKRDCPT). CCHC-type zinc fingers lie at residues 345-362 (GPCYRCLKEGHWARDCPT) and 370-387 (GPCPICKDPSHWKRDCPT). Positions 447–525 (ALMLVDTGAE…DKWQILGRDV (79 aa)) constitute a Peptidase A2 domain. Residue D452 is the Protease; shared with dimeric partner of the active site.

In terms of assembly, homodimer; the homodimers are part of the immature particles. Interacts with human TSG101 and NEDD4; these interactions are essential for budding and release of viral particles. As to quaternary structure, homodimer; further assembles as homohexamers. Post-translationally, specific enzymatic cleavages by the viral protease yield mature proteins. The polyprotein is cleaved during and after budding, this process is termed maturation. The protease is autoproteolytically processed at its N- and C-termini. Gag polyprotein: Myristoylated. Myristoylation of the matrix (MA) domain mediates the transport and binding of Gag polyproteins to the host plasma membrane and is required for the assembly of viral particles.

The protein localises to the virion. The matrix domain targets Gag, Gag-Pro and Gag-Pro-Pol polyproteins to the plasma membrane via a multipartite membrane binding signal, that includes its myristoylated N-terminus. In terms of biological role, matrix protein. Its function is as follows. Forms the spherical core of the virus that encapsulates the genomic RNA-nucleocapsid complex. Functionally, binds strongly to viral nucleic acids and promote their aggregation. Also destabilizes the nucleic acids duplexes via highly structured zinc-binding motifs. The aspartyl protease mediates proteolytic cleavages of Gag and Gag-Pol polyproteins during or shortly after the release of the virion from the plasma membrane. Cleavages take place as an ordered, step-wise cascade to yield mature proteins. This process is called maturation. Displays maximal activity during the budding process just prior to particle release from the cell. This is Gag-Pro polyprotein from Bos taurus (Bovine).